The sequence spans 230 residues: uncharacterized protein (230 aa).

This is an uncharacterized protein from Encephalitozoon cuniculi (strain GB-M1) (Microsporidian parasite).